The following is a 499-amino-acid chain: Flotillin-like protein 2 (499 aa).

A lipid anchor (S-palmitoyl cysteine) is attached at Cys-37. A coiled-coil region spans residues 243–319; it reads LREEAKVKAE…LRLTEKLKAE (77 aa).

It belongs to the band 7/mec-2 family. Flotillin subfamily. May be palmitoylated.

It is found in the cell membrane. The protein localises to the membrane. It localises to the caveola. Its function is as follows. May act as a scaffolding protein within caveolar membranes, functionally participating in formation of caveolae or caveolae-like vesicles. This is Flotillin-like protein 2 (FLOT2) from Oryza sativa subsp. japonica (Rice).